A 239-amino-acid chain; its full sequence is Phosphoribosylaminoimidazole-succinocarboxamide synthase (239 aa).

Belongs to the SAICAR synthetase family.

It carries out the reaction 5-amino-1-(5-phospho-D-ribosyl)imidazole-4-carboxylate + L-aspartate + ATP = (2S)-2-[5-amino-1-(5-phospho-beta-D-ribosyl)imidazole-4-carboxamido]succinate + ADP + phosphate + 2 H(+). It functions in the pathway purine metabolism; IMP biosynthesis via de novo pathway; 5-amino-1-(5-phospho-D-ribosyl)imidazole-4-carboxamide from 5-amino-1-(5-phospho-D-ribosyl)imidazole-4-carboxylate: step 1/2. This Bacillus cereus (strain 03BB102) protein is Phosphoribosylaminoimidazole-succinocarboxamide synthase.